Reading from the N-terminus, the 859-residue chain is DNA mismatch repair protein MutS (859 aa).

617–624 (GPNMGGKS) is a binding site for ATP. The interval 801–820 (TSLPHEVAPQAPGKPSVPQQ) is disordered.

Belongs to the DNA mismatch repair MutS family.

Its function is as follows. This protein is involved in the repair of mismatches in DNA. It is possible that it carries out the mismatch recognition step. This protein has a weak ATPase activity. The protein is DNA mismatch repair protein MutS of Pseudomonas fluorescens (strain ATCC BAA-477 / NRRL B-23932 / Pf-5).